We begin with the raw amino-acid sequence, 182 residues long: Sec-independent protein translocase protein TatB (182 aa).

Residues 1-21 (MFDIGFSELLLVFVIGLIVLG) form a helical membrane-spanning segment. Disordered regions lie at residues 88–107 (AAESMKRTYSANDPEQASDE) and 121–182 (TQHE…SDKP). Residues 168 to 182 (AAPVVESSPSSSDKP) are compositionally biased toward low complexity.

The protein belongs to the TatB family. The Tat system comprises two distinct complexes: a TatABC complex, containing multiple copies of TatA, TatB and TatC subunits, and a separate TatA complex, containing only TatA subunits. Substrates initially bind to the TatABC complex, which probably triggers association of the separate TatA complex to form the active translocon.

It is found in the cell inner membrane. Part of the twin-arginine translocation (Tat) system that transports large folded proteins containing a characteristic twin-arginine motif in their signal peptide across membranes. Together with TatC, TatB is part of a receptor directly interacting with Tat signal peptides. TatB may form an oligomeric binding site that transiently accommodates folded Tat precursor proteins before their translocation. The protein is Sec-independent protein translocase protein TatB of Salmonella typhi.